The primary structure comprises 333 residues: Fe-S cluster assembly protein dre2 (333 aa).

The interval 1-29 (MSPITLDLTSDFNPANTTGAGSSSSQPRT) is disordered. The span at 7 to 28 (DLTSDFNPANTTGAGSSSSQPR) shows a compositional bias: polar residues. An N-terminal SAM-like domain region spans residues 23 to 158 (SSSQPRTLLV…KPDYAEEEAV (136 aa)). The tract at residues 159-225 (PLRFGLKRKT…EDTLLTEADL (67 aa)) is linker. The [2Fe-2S] cluster site is built by Cys235, Cys246, Cys249, and Cys251. The tract at residues 235–251 (CQPKPGKKRRACKDCTC) is fe-S binding site A. Positions 296, 299, 307, and 310 each coordinate [4Fe-4S] cluster. 2 consecutive short sequence motifs (cx2C motif) follow at residues 296-299 (CGSC) and 307-310 (CAGC). Residues 296-310 (CGSCALGDAFRCAGC) are fe-S binding site B.

It belongs to the anamorsin family. Monomer. Interacts with tah18. Interacts with mia40. [2Fe-2S] cluster serves as cofactor. It depends on [4Fe-4S] cluster as a cofactor.

The protein localises to the cytoplasm. It is found in the mitochondrion intermembrane space. Functionally, component of the cytosolic iron-sulfur (Fe-S) protein assembly (CIA) machinery required for the maturation of extramitochondrial Fe-S proteins. Part of an electron transfer chain functioning in an early step of cytosolic Fe-S biogenesis, facilitating the de novo assembly of a [4Fe-4S] cluster on the scaffold complex cfd1-nbp35. Electrons are transferred to dre2 from NADPH via the FAD- and FMN-containing protein tah18. Tah18-dre2 are also required for the assembly of the diferric tyrosyl radical cofactor of ribonucleotide reductase (RNR), probably by providing electrons for reduction during radical cofactor maturation in the catalytic small subunit rnr2. The polypeptide is Fe-S cluster assembly protein dre2 (Neurospora crassa (strain ATCC 24698 / 74-OR23-1A / CBS 708.71 / DSM 1257 / FGSC 987)).